The primary structure comprises 473 residues: Ribulose bisphosphate carboxylase large chain (473 aa).

Residues N116 and T166 each contribute to the substrate site. K168 serves as the catalytic Proton acceptor. K170 contacts substrate. Residues K194, D196, and E197 each contribute to the Mg(2+) site. K194 bears the N6-carboxylysine mark. H287 serves as the catalytic Proton acceptor. Residues R288, H320, and S372 each coordinate substrate.

The protein belongs to the RuBisCO large chain family. Type I subfamily. As to quaternary structure, heterohexadecamer of 8 large chains and 8 small chains. The cofactor is Mg(2+).

The catalysed reaction is 2 (2R)-3-phosphoglycerate + 2 H(+) = D-ribulose 1,5-bisphosphate + CO2 + H2O. The enzyme catalyses D-ribulose 1,5-bisphosphate + O2 = 2-phosphoglycolate + (2R)-3-phosphoglycerate + 2 H(+). RuBisCO catalyzes two reactions: the carboxylation of D-ribulose 1,5-bisphosphate, the primary event in carbon dioxide fixation, as well as the oxidative fragmentation of the pentose substrate. Both reactions occur simultaneously and in competition at the same active site. The protein is Ribulose bisphosphate carboxylase large chain of Thiomonas intermedia (strain K12) (Thiobacillus intermedius).